The primary structure comprises 106 residues: Putative double-stranded DNA mimic protein VIBHAR_02752 (106 aa).

The protein belongs to the putative dsDNA mimic protein family.

Functionally, may act as a double-stranded DNA (dsDNA) mimic. Probably regulates the activity of a dsDNA-binding protein. The polypeptide is Putative double-stranded DNA mimic protein VIBHAR_02752 (Vibrio campbellii (strain ATCC BAA-1116)).